The sequence spans 339 residues: MQLSGYPMRQASCDMKEGGLRNKVAVIGSGSWGTAIANLLCKAGNETILWGRDENVIDEINNARVNSKYLPGVELFLRATCDLDYAVADASHVYIALPSFALSKVLPKLSLDKFSIVISLIKCLEPDTGRRMSEVISEALDLGHNRLAVISGPNLALEVANDEPSVSVVASANIATANIVAGTLKCPGFYCIPSSDIKGVEICAASKNLVALISGIARGMDLGDNTRAALITLGFRELLRLVLENGGTEETVFGVAGLGDVVATCNSHLSRNNKAGVLLAKGAPLDEVKQTAEGVVAISGVLALAERSGVYMPIAQALSQVISGKRTAHSLLDICFSLA.

Ser-31, Trp-32, Arg-52, and Lys-122 together coordinate NADPH. 2 residues coordinate sn-glycerol 3-phosphate: Lys-122 and Gly-152. Ala-156 is a binding site for NADPH. Sn-glycerol 3-phosphate is bound by residues Lys-207, Asp-260, Ser-270, Arg-271, and Asn-272. Lys-207 functions as the Proton acceptor in the catalytic mechanism. An NADPH-binding site is contributed by Arg-271. Glu-293 serves as a coordination point for NADPH.

It belongs to the NAD-dependent glycerol-3-phosphate dehydrogenase family.

Its subcellular location is the cytoplasm. It carries out the reaction sn-glycerol 3-phosphate + NAD(+) = dihydroxyacetone phosphate + NADH + H(+). The catalysed reaction is sn-glycerol 3-phosphate + NADP(+) = dihydroxyacetone phosphate + NADPH + H(+). It functions in the pathway membrane lipid metabolism; glycerophospholipid metabolism. Its function is as follows. Catalyzes the reduction of the glycolytic intermediate dihydroxyacetone phosphate (DHAP) to sn-glycerol 3-phosphate (G3P), the key precursor for phospholipid synthesis. This chain is Glycerol-3-phosphate dehydrogenase [NAD(P)+], found in Tropheryma whipplei (strain Twist) (Whipple's bacillus).